The chain runs to 310 residues: Putative S-adenosyl-L-methionine-dependent methyltransferase MUL_2766 (310 aa).

S-adenosyl-L-methionine-binding positions include Asp-131 and 160–161 (DL).

This sequence belongs to the UPF0677 family.

Exhibits S-adenosyl-L-methionine-dependent methyltransferase activity. The protein is Putative S-adenosyl-L-methionine-dependent methyltransferase MUL_2766 of Mycobacterium ulcerans (strain Agy99).